Consider the following 238-residue polypeptide: ATP-dependent dethiobiotin synthetase BioD (238 aa).

12–17 contributes to the ATP binding site; the sequence is EVGKTV. Thr-16 contributes to the Mg(2+) binding site. The active site involves Lys-37. Position 41 (Thr-41) interacts with substrate. Residues Asp-50, 109–112, 170–171, and 200–202 contribute to the ATP site; these read EGAG, GS, and PAG. The Mg(2+) site is built by Asp-50 and Glu-109.

It belongs to the dethiobiotin synthetase family. In terms of assembly, homodimer. It depends on Mg(2+) as a cofactor.

The protein resides in the cytoplasm. The catalysed reaction is (7R,8S)-7,8-diammoniononanoate + CO2 + ATP = (4R,5S)-dethiobiotin + ADP + phosphate + 3 H(+). The protein operates within cofactor biosynthesis; biotin biosynthesis; biotin from 7,8-diaminononanoate: step 1/2. Its function is as follows. Catalyzes a mechanistically unusual reaction, the ATP-dependent insertion of CO2 between the N7 and N8 nitrogen atoms of 7,8-diaminopelargonic acid (DAPA, also called 7,8-diammoniononanoate) to form a ureido ring. This chain is ATP-dependent dethiobiotin synthetase BioD, found in Streptomyces avermitilis (strain ATCC 31267 / DSM 46492 / JCM 5070 / NBRC 14893 / NCIMB 12804 / NRRL 8165 / MA-4680).